Here is a 195-residue protein sequence, read N- to C-terminus: ATP-dependent Clp protease proteolytic subunit (195 aa).

The active-site Nucleophile is S97. H122 is an active-site residue.

It belongs to the peptidase S14 family. In terms of assembly, fourteen ClpP subunits assemble into 2 heptameric rings which stack back to back to give a disk-like structure with a central cavity, resembling the structure of eukaryotic proteasomes.

Its subcellular location is the cytoplasm. It carries out the reaction Hydrolysis of proteins to small peptides in the presence of ATP and magnesium. alpha-casein is the usual test substrate. In the absence of ATP, only oligopeptides shorter than five residues are hydrolyzed (such as succinyl-Leu-Tyr-|-NHMec, and Leu-Tyr-Leu-|-Tyr-Trp, in which cleavage of the -Tyr-|-Leu- and -Tyr-|-Trp bonds also occurs).. Cleaves peptides in various proteins in a process that requires ATP hydrolysis. Has a chymotrypsin-like activity. Plays a major role in the degradation of misfolded proteins. This is ATP-dependent Clp protease proteolytic subunit from Campylobacter hominis (strain ATCC BAA-381 / DSM 21671 / CCUG 45161 / LMG 19568 / NCTC 13146 / CH001A).